The sequence spans 267 residues: 3-methyl-2-oxobutanoate hydroxymethyltransferase (267 aa).

Mg(2+) contacts are provided by D46 and D85. 3-methyl-2-oxobutanoate is bound by residues 46–47 (DS), D85, and K115. Mg(2+) is bound at residue E117. The active-site Proton acceptor is E184.

The protein belongs to the PanB family. In terms of assembly, homodecamer; pentamer of dimers. Mg(2+) serves as cofactor.

The protein localises to the cytoplasm. The catalysed reaction is 3-methyl-2-oxobutanoate + (6R)-5,10-methylene-5,6,7,8-tetrahydrofolate + H2O = 2-dehydropantoate + (6S)-5,6,7,8-tetrahydrofolate. It participates in cofactor biosynthesis; (R)-pantothenate biosynthesis; (R)-pantoate from 3-methyl-2-oxobutanoate: step 1/2. Its function is as follows. Catalyzes the reversible reaction in which hydroxymethyl group from 5,10-methylenetetrahydrofolate is transferred onto alpha-ketoisovalerate to form ketopantoate. This is 3-methyl-2-oxobutanoate hydroxymethyltransferase from Geobacter metallireducens (strain ATCC 53774 / DSM 7210 / GS-15).